A 677-amino-acid chain; its full sequence is Methionine--tRNA ligase (677 aa).

Residues 15 to 25 (PYANGSIHLGH) carry the 'HIGH' region motif. Residues Cys-146, Cys-149, Cys-159, and Cys-162 each coordinate Zn(2+). Positions 333-337 (KMSKS) match the 'KMSKS' region motif. An ATP-binding site is contributed by Lys-336. Residues 575–677 (DFAKVDLRVA…AGAKPGHQVK (103 aa)) form the tRNA-binding domain.

It belongs to the class-I aminoacyl-tRNA synthetase family. MetG type 1 subfamily. Homodimer. It depends on Zn(2+) as a cofactor.

It localises to the cytoplasm. It catalyses the reaction tRNA(Met) + L-methionine + ATP = L-methionyl-tRNA(Met) + AMP + diphosphate. Functionally, is required not only for elongation of protein synthesis but also for the initiation of all mRNA translation through initiator tRNA(fMet) aminoacylation. In Escherichia coli O81 (strain ED1a), this protein is Methionine--tRNA ligase.